The chain runs to 603 residues: Elongation factor 4 (603 aa).

One can recognise a tr-type G domain in the interval K6–I188. Residues D18 to T23 and N135 to D138 contribute to the GTP site.

The protein belongs to the TRAFAC class translation factor GTPase superfamily. Classic translation factor GTPase family. LepA subfamily.

It is found in the cell membrane. The enzyme catalyses GTP + H2O = GDP + phosphate + H(+). Required for accurate and efficient protein synthesis under certain stress conditions. May act as a fidelity factor of the translation reaction, by catalyzing a one-codon backward translocation of tRNAs on improperly translocated ribosomes. Back-translocation proceeds from a post-translocation (POST) complex to a pre-translocation (PRE) complex, thus giving elongation factor G a second chance to translocate the tRNAs correctly. Binds to ribosomes in a GTP-dependent manner. This chain is Elongation factor 4, found in Finegoldia magna (strain ATCC 29328 / DSM 20472 / WAL 2508) (Peptostreptococcus magnus).